The primary structure comprises 526 residues: MIRTALLSVSDKNGIVPFAKSLHEQGIKLISTGGTAKLLAENNLPVVEVSSLTKFPEMLDGRVKTLHPMVHGGLLARRDFPEHMAALEEHGIDTIDMLVINLYPFNETVAKENCSFEDAVENIDIGGPAMLRAAAKNHQDVTVLISPEDYAPVLAEMKANQNVVSYKTNLALAKKVFAHTAQYDGSIANYLSALGDDLDHKARSAYPETLHLAFEKVQEMRYGENPHQSAAFYKDIYPVNGALANYKQLQGKELSYNNIADADSAWECVKSFAGNSGGAAACVIIKHANPCGVAVGASALEAYQKAFKTDPSSAFGGIIAFNIPCDGAAAQEISKQFVEVLIAPSFTDEAKAIFAAKQNVRLLEIPLGNAFNTFDFKRVGGGLLVQSPDAKNVLQNEMRVVSQRQPTPSEMNDMMFAWRVAKFVKSNAIVYCSNGMTLGIGAGQMSRVDSARMASIKAENAGLSLKGSAVASDAFFPFRDGLDVVVNGGASCAIQPGGSMRDDEIIAAANEHGIAMIFTGTRHFRH.

Positions 1-145 constitute an MGS-like domain; the sequence is MIRTALLSVS…KNHQDVTVLI (145 aa).

This sequence belongs to the PurH family.

The catalysed reaction is (6R)-10-formyltetrahydrofolate + 5-amino-1-(5-phospho-beta-D-ribosyl)imidazole-4-carboxamide = 5-formamido-1-(5-phospho-D-ribosyl)imidazole-4-carboxamide + (6S)-5,6,7,8-tetrahydrofolate. It carries out the reaction IMP + H2O = 5-formamido-1-(5-phospho-D-ribosyl)imidazole-4-carboxamide. The protein operates within purine metabolism; IMP biosynthesis via de novo pathway; 5-formamido-1-(5-phospho-D-ribosyl)imidazole-4-carboxamide from 5-amino-1-(5-phospho-D-ribosyl)imidazole-4-carboxamide (10-formyl THF route): step 1/1. It participates in purine metabolism; IMP biosynthesis via de novo pathway; IMP from 5-formamido-1-(5-phospho-D-ribosyl)imidazole-4-carboxamide: step 1/1. The polypeptide is Bifunctional purine biosynthesis protein PurH (Polynucleobacter asymbioticus (strain DSM 18221 / CIP 109841 / QLW-P1DMWA-1) (Polynucleobacter necessarius subsp. asymbioticus)).